Consider the following 173-residue polypeptide: Large ribosomal subunit protein bL9 (173 aa).

This sequence belongs to the bacterial ribosomal protein bL9 family.

Its function is as follows. Binds to the 23S rRNA. The polypeptide is Large ribosomal subunit protein bL9 (Chlamydia felis (strain Fe/C-56) (Chlamydophila felis)).